A 312-amino-acid polypeptide reads, in one-letter code: Olfactory receptor 2M7 (312 aa).

The Extracellular portion of the chain corresponds to 1 to 25 (MAWENQTFNSDFLLLGIFNHSPTHT). N-linked (GlcNAc...) asparagine glycosylation is present at Asn5. A helical transmembrane segment spans residues 26 to 49 (FLFFLVLAIFSVAFMGNSIMVLLI). Over 50-57 (YLDTQLHT) the chain is Cytoplasmic. The chain crosses the membrane as a helical span at residues 58–79 (PMYFLLSQLSLMDLMLICTTVP). Residues 80-100 (KMAFNYLSGSKSISMAGCATQ) lie on the Extracellular side of the membrane. Cys97 and Cys189 are disulfide-bonded. A helical membrane pass occupies residues 101–120 (IFFYISLLGSECFLLAVMSY). Residues 121–139 (DRYTAICHPLRYTNLMRPK) are Cytoplasmic-facing. The helical transmembrane segment at 140–158 (ICGLMTAFSWILGSTDGII) threads the bilayer. Over 159 to 195 (DAVATFSFSYCGSREIAHFCCDFPSLLILSCNDTSIF) the chain is Extracellular. A helical membrane pass occupies residues 196–219 (EEVIFICCIVMLVFPVAIIITSYA). The Cytoplasmic portion of the chain corresponds to 220-236 (RVILAVIHMGSGEGRRK). Residues 237-259 (AFTTCSSHLMVVGMYYGAGLFMC) form a helical membrane-spanning segment. The Extracellular segment spans residues 260–272 (IQPTSHHSPMQDK). A helical transmembrane segment spans residues 273–292 (MVSVFYTIVTPMLNPLIYSL). At 293-311 (RNKEVTRALMKILGKGKSG) the chain is on the cytoplasmic side.

This sequence belongs to the G-protein coupled receptor 1 family.

Its subcellular location is the cell membrane. Its function is as follows. Odorant receptor. In Homo sapiens (Human), this protein is Olfactory receptor 2M7 (OR2M7).